We begin with the raw amino-acid sequence, 276 residues long: Membrane protein insertase YidC 2 (276 aa).

A signal peptide spans 1-22 (MGVKKKLKLTSLLGLSLLIMTA). The N-palmitoyl cysteine moiety is linked to residue Cys-23. Cys-23 is lipidated: S-diacylglycerol cysteine. Transmembrane regions (helical) follow at residues 58 to 78 (ISIG…LLPV), 130 to 150 (SDSL…FQAL), 169 to 189 (VDTT…STWL), and 207 to 227 (GIPV…ALYW).

It belongs to the OXA1/ALB3/YidC family. Type 2 subfamily. As to quaternary structure, interacts with KhpB (also called EloR/Jag).

It is found in the cell membrane. Its function is as follows. Required for the insertion and/or proper folding and/or complex formation of integral membrane proteins into the membrane. Involved in integration of membrane proteins that insert both dependently and independently of the Sec translocase complex, as well as at least some lipoproteins. This chain is Membrane protein insertase YidC 2, found in Streptococcus pneumoniae (strain ATCC BAA-255 / R6).